Here is a 188-residue protein sequence, read N- to C-terminus: Ribosome maturation factor RimP (188 aa).

The protein belongs to the RimP family.

The protein resides in the cytoplasm. Functionally, required for maturation of 30S ribosomal subunits. In Corynebacterium aurimucosum (strain ATCC 700975 / DSM 44827 / CIP 107346 / CN-1) (Corynebacterium nigricans), this protein is Ribosome maturation factor RimP.